We begin with the raw amino-acid sequence, 38 residues long: U-theraphotoxin-Aju1a (38 aa).

Intrachain disulfides connect C3–C24, C7–C30, and C16–C35.

As to expression, expressed by the venom gland.

Its subcellular location is the secreted. Functionally, has strong antifungal activity against C.albicans MDM8, C.krusei IOC 4559 (MIC=2.5-5 uM), C.glabrata IOC 45658 (MIC=2.5-5 uM), C.albicans IOC 45588 (MIC=2.5-5 uM), C.parapsilosis IOC 456416 (MIC=2.5-5 uM), C.tropicalis IOC 45608 (MIC=2.5-5 uM), C.guilliermondii IOC 455716 (MIC=2.5-5 uM) and A.niger (MIC=5-10 uM). Lacks antifungal activity against B.bassiana. Has no antibacterial effect against Gram-positive bacteria M.luteus, S.epidermidis, S.aureus or against Gram-negative bacteria E.coli and P.aeruginosa. Has no hemolytic activity against human erythrocytes. Probable ion channel inhibitor. This chain is U-theraphotoxin-Aju1a, found in Avicularia juruensis (Yellow-banded pinktoe).